A 542-amino-acid chain; its full sequence is Tubby-related protein 1 (542 aa).

Residues 1–289 (MPLRDETLRE…RAPSPPVEVD (289 aa)) form a disordered region. Residues 91–104 (FLRDPEAKKRDPRE) are compositionally biased toward basic and acidic residues. The span at 114–132 (AEDEEEEEEEDEEDEEEEA) shows a compositional bias: acidic residues. The span at 146–157 (PLREKSSADLKE) shows a compositional bias: basic and acidic residues. Positions 262–275 (SNQKGKAKGKGKKK) are enriched in basic residues.

This sequence belongs to the TUB family. In terms of assembly, homodimer. May interact with ABCF1, PSIP1, ZEB1 and HMGB2 (Potential). Interacts with DNM1. Interacts with F-actin. Interacts with TUB. Interacts with TYRO3. In terms of tissue distribution, retina-specific.

It is found in the cytoplasm. Its subcellular location is the cell membrane. The protein resides in the secreted. It localises to the synapse. In terms of biological role, required for normal development of photoreceptor synapses. Required for normal photoreceptor function and for long-term survival of photoreceptor cells. Interacts with cytoskeleton proteins and may play a role in protein transport in photoreceptor cells. Binds lipids, especially phosphatidylinositol 3-phosphate, phosphatidylinositol 4-phosphate, phosphatidylinositol 5-phosphate, phosphatidylinositol 3,4-bisphosphate, phosphatidylinositol 4,5-bisphosphate, phosphatidylinositol 3,4,5-bisphosphate, phosphatidylserine and phosphatidic acid (in vitro). Contribute to stimulation of phagocytosis of apoptotic retinal pigment epithelium (RPE) cells and macrophages. In Homo sapiens (Human), this protein is Tubby-related protein 1 (TULP1).